Consider the following 317-residue polypeptide: Olfactory receptor 5AP2 (317 aa).

The Extracellular segment spans residues 1-32 (MVRSGKGIQNKNATEVTEFILLGLSDNPDLQG). N12 carries N-linked (GlcNAc...) asparagine glycosylation. The chain crosses the membrane as a helical span at residues 33–53 (VLFALFLIIYTMTLVGNLGMM). At 54-61 (ALIKIDRS) the chain is on the cytoplasmic side. A helical transmembrane segment spans residues 62–82 (LHTPMYFFLSSLSFVDASYSS). The Extracellular segment spans residues 83–106 (SVTPKMLVNLMAEDKSISFNGCAT). Cysteines 104 and 196 form a disulfide. The chain crosses the membrane as a helical span at residues 107–127 (QFFFFGSFLGTECFLLAMMAY). Residues 128–140 (DRYAAIWNPLLYP) are Cytoplasmic-facing. A helical membrane pass occupies residues 141 to 161 (VLMSGRICFMLVSTSFLAGFG). The Extracellular portion of the chain corresponds to 162–203 (NAAIHTGMTFRLSFCGSNKINHFYCDTPPLLKLSCSDTHING). The chain crosses the membrane as a helical span at residues 204–224 (IVIMAFSSFNVISCVLIVLIS). The Cytoplasmic portion of the chain corresponds to 225-244 (YLCILIAILKMPSAEGRHKA). The helical transmembrane segment at 245–265 (FSTCASHLMAVTIFFGTILFM) threads the bilayer. Topologically, residues 266-278 (YLRPTSSYSMEQD) are extracellular. Residues 279-299 (KVVSVFYTVVIPMLNPLIYSL) form a helical membrane-spanning segment. The Cytoplasmic portion of the chain corresponds to 300-317 (KNKDVKKAVKKILHNYVV).

It belongs to the G-protein coupled receptor 1 family.

The protein resides in the cell membrane. Its function is as follows. Odorant receptor. This Mus musculus (Mouse) protein is Olfactory receptor 5AP2.